The following is a 316-amino-acid chain: HPr kinase/phosphorylase (316 aa).

Residues histidine 143 and lysine 164 contribute to the active site. 158 to 165 (GEAGSGKS) provides a ligand contact to ATP. Serine 165 contacts Mg(2+). Aspartate 182 (proton acceptor; for phosphorylation activity. Proton donor; for dephosphorylation activity) is an active-site residue. Residues 206-215 (LEVRGLGVLN) form an important for the catalytic mechanism of both phosphorylation and dephosphorylation region. Glutamate 207 is a binding site for Mg(2+). The active site involves arginine 251. Residues 272–277 (PVMPGR) form an important for the catalytic mechanism of dephosphorylation region.

It belongs to the HPrK/P family. As to quaternary structure, homohexamer. It depends on Mg(2+) as a cofactor.

The enzyme catalyses [HPr protein]-L-serine + ATP = [HPr protein]-O-phospho-L-serine + ADP + H(+). It catalyses the reaction [HPr protein]-O-phospho-L-serine + phosphate + H(+) = [HPr protein]-L-serine + diphosphate. Functionally, catalyzes the ATP- as well as the pyrophosphate-dependent phosphorylation of a specific serine residue in HPr, a phosphocarrier protein of the phosphoenolpyruvate-dependent sugar phosphotransferase system (PTS). HprK/P also catalyzes the pyrophosphate-producing, inorganic phosphate-dependent dephosphorylation (phosphorolysis) of seryl-phosphorylated HPr (P-Ser-HPr). The polypeptide is HPr kinase/phosphorylase (Xanthomonas campestris pv. campestris (strain 8004)).